The primary structure comprises 274 residues: Aliphatic sulfonates import ATP-binding protein SsuB 2 (274 aa).

Residues 21–242 enclose the ABC transporter domain; that stretch reads LALRGVARRF…SRGSARLAAL (222 aa). 53–60 is an ATP binding site; it reads GRSGCGKS.

It belongs to the ABC transporter superfamily. Aliphatic sulfonates importer (TC 3.A.1.17.2) family. The complex is composed of two ATP-binding proteins (SsuB), two transmembrane proteins (SsuC) and a solute-binding protein (SsuA).

Its subcellular location is the cell inner membrane. It carries out the reaction ATP + H2O + aliphatic sulfonate-[sulfonate-binding protein]Side 1 = ADP + phosphate + aliphatic sulfonateSide 2 + [sulfonate-binding protein]Side 1.. In terms of biological role, part of the ABC transporter complex SsuABC involved in aliphatic sulfonates import. Responsible for energy coupling to the transport system. This Pseudomonas aeruginosa (strain UCBPP-PA14) protein is Aliphatic sulfonates import ATP-binding protein SsuB 2.